A 257-amino-acid polypeptide reads, in one-letter code: NAD-capped RNA hydrolase NudC (257 aa).

Substrate is bound at residue Arg69. Positions 98 and 101 each coordinate Zn(2+). Residue Glu111 coordinates substrate. Zn(2+) is bound by residues Cys116 and Cys119. A substrate-binding site is contributed by Tyr124. The Nudix hydrolase domain maps to 125–248 (PQIAPCIIVA…TVARRLIEDT (124 aa)). Positions 158, 174, and 178 each coordinate a divalent metal cation. The short motif at 159–180 (GFVEVGETLEQAVAREVMEESG) is the Nudix box element. Position 192–199 (192–199 (QPWPFPQS)) interacts with substrate. Glu219 is an a divalent metal cation binding site. Position 241 (Ala241) interacts with substrate.

Belongs to the Nudix hydrolase family. NudC subfamily. In terms of assembly, homodimer. Mg(2+) is required as a cofactor. It depends on Mn(2+) as a cofactor. Requires Zn(2+) as cofactor.

It carries out the reaction a 5'-end NAD(+)-phospho-ribonucleoside in mRNA + H2O = a 5'-end phospho-adenosine-phospho-ribonucleoside in mRNA + beta-nicotinamide D-ribonucleotide + 2 H(+). The catalysed reaction is NAD(+) + H2O = beta-nicotinamide D-ribonucleotide + AMP + 2 H(+). The enzyme catalyses NADH + H2O = reduced beta-nicotinamide D-ribonucleotide + AMP + 2 H(+). Its function is as follows. mRNA decapping enzyme that specifically removes the nicotinamide adenine dinucleotide (NAD) cap from a subset of mRNAs by hydrolyzing the diphosphate linkage to produce nicotinamide mononucleotide (NMN) and 5' monophosphate mRNA. The NAD-cap is present at the 5'-end of some mRNAs and stabilizes RNA against 5'-processing. Has preference for mRNAs with a 5'-end purine. Catalyzes the hydrolysis of a broad range of dinucleotide pyrophosphates. This is NAD-capped RNA hydrolase NudC from Salmonella heidelberg (strain SL476).